Consider the following 312-residue polypeptide: Ribosomal RNA small subunit methyltransferase H (312 aa).

Residues 35 to 37 (GGH), Asp-55, Phe-79, Asp-101, and Gln-108 contribute to the S-adenosyl-L-methionine site.

This sequence belongs to the methyltransferase superfamily. RsmH family.

It is found in the cytoplasm. The catalysed reaction is cytidine(1402) in 16S rRNA + S-adenosyl-L-methionine = N(4)-methylcytidine(1402) in 16S rRNA + S-adenosyl-L-homocysteine + H(+). Its function is as follows. Specifically methylates the N4 position of cytidine in position 1402 (C1402) of 16S rRNA. The protein is Ribosomal RNA small subunit methyltransferase H of Buchnera aphidicola subsp. Schizaphis graminum (strain Sg).